A 121-amino-acid chain; its full sequence is UPF0102 protein Mvan_2202 (121 aa).

This sequence belongs to the UPF0102 family.

The polypeptide is UPF0102 protein Mvan_2202 (Mycolicibacterium vanbaalenii (strain DSM 7251 / JCM 13017 / BCRC 16820 / KCTC 9966 / NRRL B-24157 / PYR-1) (Mycobacterium vanbaalenii)).